A 522-amino-acid chain; its full sequence is Lysine--tRNA ligase (522 aa).

The 'HIGH' region signature appears at 44 to 52; that stretch reads PSGLPHIGT. The short motif at 290–294 is the 'KMSKS' region element; it reads KISKS. Lysine 293 lines the ATP pocket.

It belongs to the class-I aminoacyl-tRNA synthetase family.

The protein localises to the cytoplasm. It catalyses the reaction tRNA(Lys) + L-lysine + ATP = L-lysyl-tRNA(Lys) + AMP + diphosphate. This Rickettsia bellii (strain RML369-C) protein is Lysine--tRNA ligase.